Reading from the N-terminus, the 118-residue chain is Protein TusC (118 aa).

This sequence belongs to the DsrF/TusC family. In terms of assembly, heterohexamer, formed by a dimer of trimers. The hexameric TusBCD complex contains 2 copies each of TusB, TusC and TusD. The TusBCD complex interacts with TusE.

The protein localises to the cytoplasm. In terms of biological role, part of a sulfur-relay system required for 2-thiolation of 5-methylaminomethyl-2-thiouridine (mnm(5)s(2)U) at tRNA wobble positions. This Salmonella gallinarum (strain 287/91 / NCTC 13346) protein is Protein TusC.